Here is a 257-residue protein sequence, read N- to C-terminus: Pantothenate synthetase (257 aa).

29–36 serves as a coordination point for ATP; the sequence is MGNLHAGH. His-36 functions as the Proton donor in the catalytic mechanism. Residue Gln-60 coordinates (R)-pantoate. Gln-60 serves as a coordination point for beta-alanine. 145 to 148 is a binding site for ATP; it reads GEKD. Gln-151 lines the (R)-pantoate pocket. Residues Val-174 and 182 to 185 contribute to the ATP site; that span reads LSSR.

This sequence belongs to the pantothenate synthetase family. In terms of assembly, homodimer.

It is found in the cytoplasm. The catalysed reaction is (R)-pantoate + beta-alanine + ATP = (R)-pantothenate + AMP + diphosphate + H(+). Its pathway is cofactor biosynthesis; (R)-pantothenate biosynthesis; (R)-pantothenate from (R)-pantoate and beta-alanine: step 1/1. Catalyzes the condensation of pantoate with beta-alanine in an ATP-dependent reaction via a pantoyl-adenylate intermediate. The polypeptide is Pantothenate synthetase (Coxiella burnetii (strain Dugway 5J108-111)).